A 189-amino-acid chain; its full sequence is UPF0398 protein LCK_00599 (189 aa).

This sequence belongs to the UPF0398 family.

The protein is UPF0398 protein LCK_00599 of Leuconostoc citreum (strain KM20).